The chain runs to 600 residues: DNA repair and recombination protein mus-11 (600 aa).

A DNA-binding region spans residues Lys-148 to Arg-152. Residues Leu-268 to Pro-319 are compositionally biased toward polar residues. Disordered stretches follow at residues Leu-268–Ala-357 and Ala-387–Ala-600. 2 stretches are compositionally biased toward low complexity: residues Asn-325–Gln-343 and Ala-458–Pro-470. Over residues Gly-502–Gly-512 the composition is skewed to polar residues. Composition is skewed to low complexity over residues Ser-540–Ala-564 and Ala-577–Gly-591.

This sequence belongs to the RAD52 family. Part of a complex that includes mei-3/rad51 and mus-11/rad52.

Its subcellular location is the nucleus. Involved in DNA double-strand break (DSB) repair and recombination. Promotes the annealing of complementary single-stranded DNA and by stimulation of the mei-3/rad51 recombinase. This chain is DNA repair and recombination protein mus-11 (mus-11), found in Neurospora crassa (strain ATCC 24698 / 74-OR23-1A / CBS 708.71 / DSM 1257 / FGSC 987).